Consider the following 130-residue polypeptide: Small ribosomal subunit protein uS11c (130 aa).

The protein belongs to the universal ribosomal protein uS11 family. Part of the 30S ribosomal subunit.

It is found in the plastid. The protein localises to the chloroplast. The protein is Small ribosomal subunit protein uS11c of Stigeoclonium helveticum (Green alga).